Reading from the N-terminus, the 142-residue chain is Immunity protein WapI (142 aa).

In terms of biological role, immunity protein component of a toxin-immunity protein module, which functions as a cellular contact-dependent growth inhibition (CDI) system. Neutralizes the tRNase activity of cognate toxin WapA upon expression in E.coli. Does not inhibit WapA from other strains of B.subtilis. The WapA C-terminus cannot be expressed on its own in E.coli, however it can be cloned in the presence of its cognate immunity protein gene. Cell contact is necessary for growth inhibition. Unlike the LXG toxin-immunity modules, WapAI mediates competition under shaking culture conditions. This chain is Immunity protein WapI (wapI), found in Bacillus subtilis (strain 168).